The following is a 359-amino-acid chain: UPF0283 membrane protein RL2646 (359 aa).

Positions methionine 1 to threonine 48 are disordered. Residues threonine 23–serine 42 show a composition bias toward basic and acidic residues. Transmembrane regions (helical) follow at residues phenylalanine 77–threonine 97 and leucine 111–isoleucine 131.

The protein belongs to the UPF0283 family.

The protein localises to the cell inner membrane. The sequence is that of UPF0283 membrane protein RL2646 from Rhizobium johnstonii (strain DSM 114642 / LMG 32736 / 3841) (Rhizobium leguminosarum bv. viciae).